A 493-amino-acid polypeptide reads, in one-letter code: Ribulose bisphosphate carboxylase large chain (493 aa).

Substrate is bound by residues Asn132 and Thr182. Lys184 (proton acceptor) is an active-site residue. Substrate is bound at residue Lys186. Positions 210, 212, and 213 each coordinate Mg(2+). Lys210 is modified (N6-carboxylysine). Catalysis depends on His302, which acts as the Proton acceptor. Positions 303, 335, and 387 each coordinate substrate.

The protein belongs to the RuBisCO large chain family. Type I subfamily. As to quaternary structure, heterohexadecamer of 8 large chains and 8 small chains. Requires Mg(2+) as cofactor.

It carries out the reaction 2 (2R)-3-phosphoglycerate + 2 H(+) = D-ribulose 1,5-bisphosphate + CO2 + H2O. The catalysed reaction is D-ribulose 1,5-bisphosphate + O2 = 2-phosphoglycolate + (2R)-3-phosphoglycerate + 2 H(+). Its function is as follows. RuBisCO catalyzes two reactions: the carboxylation of D-ribulose 1,5-bisphosphate, the primary event in carbon dioxide fixation, as well as the oxidative fragmentation of the pentose substrate. Both reactions occur simultaneously and in competition at the same active site. This is Ribulose bisphosphate carboxylase large chain from Acidiphilium cryptum (strain JF-5).